A 369-amino-acid chain; its full sequence is Aminomethyltransferase (369 aa).

This sequence belongs to the GcvT family. As to quaternary structure, the glycine cleavage system is composed of four proteins: P, T, L and H.

The catalysed reaction is N(6)-[(R)-S(8)-aminomethyldihydrolipoyl]-L-lysyl-[protein] + (6S)-5,6,7,8-tetrahydrofolate = N(6)-[(R)-dihydrolipoyl]-L-lysyl-[protein] + (6R)-5,10-methylene-5,6,7,8-tetrahydrofolate + NH4(+). In terms of biological role, the glycine cleavage system catalyzes the degradation of glycine. In Xanthomonas oryzae pv. oryzae (strain MAFF 311018), this protein is Aminomethyltransferase.